Here is a 185-residue protein sequence, read N- to C-terminus: Large ribosomal subunit protein uL5 (185 aa).

Belongs to the universal ribosomal protein uL5 family. Part of the 50S ribosomal subunit; part of the 5S rRNA/L5/L18/L25 subcomplex. Contacts the 5S rRNA and the P site tRNA. Forms a bridge to the 30S subunit in the 70S ribosome.

This is one of the proteins that bind and probably mediate the attachment of the 5S RNA into the large ribosomal subunit, where it forms part of the central protuberance. In the 70S ribosome it contacts protein S13 of the 30S subunit (bridge B1b), connecting the 2 subunits; this bridge is implicated in subunit movement. Contacts the P site tRNA; the 5S rRNA and some of its associated proteins might help stabilize positioning of ribosome-bound tRNAs. This Nitrobacter winogradskyi (strain ATCC 25391 / DSM 10237 / CIP 104748 / NCIMB 11846 / Nb-255) protein is Large ribosomal subunit protein uL5.